A 656-amino-acid polypeptide reads, in one-letter code: Leucine-rich repeat-containing protein 43 (656 aa).

A compositionally biased stretch (acidic residues) spans 1-13 (MEASYESESESES). The disordered stretch occupies residues 1-25 (MEASYESESESESEAGPGTQRPGTG). LRR repeat units lie at residues 150-170 (KLEELVLSANRIKEVDATNLP), 172-193 (TLKVLELYGNEISSMECLCAHP), 196-215 (GLQHLGLGHNKLLGPLESLY), and 223-244 (NLVSLDLGFNDLTDLQSMVTSL). In terms of domain architecture, LRRCT spans 258–296 (NPLALVPYYRGLTIDSLAQLCVLDDITVSPNEKHLFRGL). Positions 512–554 (LSAKKGKGEKDKKGKEKDRTGKGEKEPAKEWKVLKKKKEPPKE) are disordered. A compositionally biased stretch (basic and acidic residues) spans 517 to 544 (GKGEKDKKGKEKDRTGKGEKEPAKEWKV).

In Homo sapiens (Human), this protein is Leucine-rich repeat-containing protein 43 (LRRC43).